The chain runs to 576 residues: Cilia- and flagella-associated protein 100 (576 aa).

A disordered region spans residues 1 to 29 (MPIYDEASVPGTAAGRSTTDVGATAGANP). 3 coiled-coil regions span residues 125-226 (IFLL…CRRY), 254-311 (VAEW…IMKE), and 342-408 (YKQL…LKDR). Disordered stretches follow at residues 417 to 439 (TLSMGSSNAPTSSVTGSSGPGGP), 495 to 519 (AEKAREKDRRKVARDEKLSTQHREH), and 538 to 563 (TGKPLMFRSAPPQRKKVVQADDRNDE).

This sequence belongs to the CFAP100 family. As to quaternary structure, interacts with FAP73; form the modifier of inner arm (MIA) complex.

The protein resides in the cytoplasm. The protein localises to the cytoskeleton. It localises to the flagellum axoneme. As part of MIA, a complex associated with the outer doublet microtubules of the axoneme, may play a role in ciliary/flagellar motility by regulating the assembly and the activity of axonemal inner dynein arm. This is Cilia- and flagella-associated protein 100 from Chlamydomonas reinhardtii (Chlamydomonas smithii).